The sequence spans 435 residues: Serine hydroxymethyltransferase (435 aa).

(6S)-5,6,7,8-tetrahydrofolate-binding positions include Leu-133 and Gly-137–Leu-139. Lys-242 carries the post-translational modification N6-(pyridoxal phosphate)lysine.

It belongs to the SHMT family. Homodimer. It depends on pyridoxal 5'-phosphate as a cofactor.

It localises to the cytoplasm. The catalysed reaction is (6R)-5,10-methylene-5,6,7,8-tetrahydrofolate + glycine + H2O = (6S)-5,6,7,8-tetrahydrofolate + L-serine. Its pathway is one-carbon metabolism; tetrahydrofolate interconversion. It functions in the pathway amino-acid biosynthesis; glycine biosynthesis; glycine from L-serine: step 1/1. In terms of biological role, catalyzes the reversible interconversion of serine and glycine with tetrahydrofolate (THF) serving as the one-carbon carrier. This reaction serves as the major source of one-carbon groups required for the biosynthesis of purines, thymidylate, methionine, and other important biomolecules. Also exhibits THF-independent aldolase activity toward beta-hydroxyamino acids, producing glycine and aldehydes, via a retro-aldol mechanism. This Sphingopyxis alaskensis (strain DSM 13593 / LMG 18877 / RB2256) (Sphingomonas alaskensis) protein is Serine hydroxymethyltransferase.